A 367-amino-acid chain; its full sequence is Peptide chain release factor 2 (367 aa).

The residue at position 254 (Q254) is an N5-methylglutamine.

The protein belongs to the prokaryotic/mitochondrial release factor family. Post-translationally, methylated by PrmC. Methylation increases the termination efficiency of RF2.

It is found in the cytoplasm. Its function is as follows. Peptide chain release factor 2 directs the termination of translation in response to the peptide chain termination codons UGA and UAA. In Janthinobacterium sp. (strain Marseille) (Minibacterium massiliensis), this protein is Peptide chain release factor 2.